The chain runs to 110 residues: ATP synthase epsilon chain (110 aa).

It belongs to the ATPase epsilon chain family. In terms of assembly, F-type ATPases have 2 components, CF(1) - the catalytic core - and CF(0) - the membrane proton channel. CF(1) has five subunits: alpha(3), beta(3), gamma(1), delta(1), epsilon(1). CF(0) has three main subunits: a, b and c.

The protein resides in the cell inner membrane. Produces ATP from ADP in the presence of a proton gradient across the membrane. This Rickettsia typhi (strain ATCC VR-144 / Wilmington) protein is ATP synthase epsilon chain.